The chain runs to 430 residues: Adenylosuccinate synthetase (430 aa).

GTP-binding positions include 13–19 (GDEGKGK) and 41–43 (GHT). The active-site Proton acceptor is D14. D14 and G41 together coordinate Mg(2+). Residues 14 to 17 (DEGK), 39 to 42 (NAGH), T130, R144, Q225, T240, and R304 contribute to the IMP site. H42 acts as the Proton donor in catalysis. A substrate-binding site is contributed by 300 to 306 (ATTGRAR). GTP-binding positions include R306, 332–334 (KLD), and 414–416 (STG).

It belongs to the adenylosuccinate synthetase family. As to quaternary structure, homodimer. Mg(2+) is required as a cofactor.

It localises to the cytoplasm. It carries out the reaction IMP + L-aspartate + GTP = N(6)-(1,2-dicarboxyethyl)-AMP + GDP + phosphate + 2 H(+). The protein operates within purine metabolism; AMP biosynthesis via de novo pathway; AMP from IMP: step 1/2. Plays an important role in the de novo pathway of purine nucleotide biosynthesis. Catalyzes the first committed step in the biosynthesis of AMP from IMP. The protein is Adenylosuccinate synthetase of Pseudomonas fluorescens (strain ATCC BAA-477 / NRRL B-23932 / Pf-5).